The sequence spans 199 residues: Potassium-transporting ATPase KdpC subunit 2 (199 aa).

A helical transmembrane segment spans residues 13 to 33; that stretch reads ITLIFWLVTAIIYPLAILVVG.

The protein belongs to the KdpC family. As to quaternary structure, the system is composed of three essential subunits: KdpA, KdpB and KdpC.

Its subcellular location is the cell inner membrane. Part of the high-affinity ATP-driven potassium transport (or Kdp) system, which catalyzes the hydrolysis of ATP coupled with the electrogenic transport of potassium into the cytoplasm. This subunit acts as a catalytic chaperone that increases the ATP-binding affinity of the ATP-hydrolyzing subunit KdpB by the formation of a transient KdpB/KdpC/ATP ternary complex. This chain is Potassium-transporting ATPase KdpC subunit 2, found in Nostoc sp. (strain PCC 7120 / SAG 25.82 / UTEX 2576).